Reading from the N-terminus, the 328-residue chain is Malate dehydrogenase (328 aa).

Residue 11–17 (GAAGQIG) coordinates NAD(+). Substrate contacts are provided by Arg-92 and Arg-98. NAD(+)-binding positions include Asn-105, Gln-112, and 129–131 (VGN). Substrate is bound by residues Asn-131 and Arg-162. His-187 acts as the Proton acceptor in catalysis.

The protein belongs to the LDH/MDH superfamily. MDH type 2 family.

The enzyme catalyses (S)-malate + NAD(+) = oxaloacetate + NADH + H(+). Catalyzes the reversible oxidation of malate to oxaloacetate. The chain is Malate dehydrogenase from Coxiella burnetii (strain CbuK_Q154) (Coxiella burnetii (strain Q154)).